We begin with the raw amino-acid sequence, 612 residues long: Baculoviral IAP repeat-containing protein 2 (612 aa).

The stretch at 46–113 is one BIR 1 repeat; that stretch reads ELYRMSTYSA…RQFYPSCSFV (68 aa). At arginine 143 the chain carries Omega-N-methylarginine. At serine 153 the chain carries Phosphoserine. BIR repeat units lie at residues 177 to 243 and 262 to 329; these read EEAR…CPFL and HSAR…CEFL. Residues cysteine 299, cysteine 302, histidine 319, and cysteine 326 each contribute to the Zn(2+) site. A CARD domain is found at 447–537; the sequence is MASGDLSLIR…TLYENLFVEK (91 aa). The segment at 565 to 600 adopts an RING-type zinc-finger fold; it reads CKVCMDREVSIVFIPCGHLVVCQECAPSLRKCPICR.

The protein belongs to the IAP family. As to quaternary structure, interacts with DIABLO/SMAC and with PRSS25; these interactions inhibit apoptotic suppressor activity. Interacts with CASP9. Interacts (via BIR domains) with TRAF2; the interaction is required for IKBKE ubiquitination. Interacts with E2F1, RIPK1, RIPK2, RIPK3, RIPK4, BIRC5/survivin and USP19. Interacts with HSP90AB1. Interacts with several death receptors, inclusing FAS, TNFRSF10A and TNFRSF10B. Recruited to TNFRSF10B in the absence of receptor stimulation. When TNFRSF10B is stimulated, further recruited to the receptor and cleaved by caspases. Proteolytic fragments remain associated with TNFRSF10B. Post-translationally, auto-ubiquitinated and degraded by the proteasome in apoptotic cells. In terms of processing, upon stimulation of death receptors, including TNFRSF10B, recruited to receptors and cleaved by caspases. Proteolytic fragments remain associated with the receptors. This cleavage presumably inactivates the protein. Expressed in heart, brain, spleen, lung, liver, skeletal muscle, kidney and testis.

It localises to the cytoplasm. The protein resides in the nucleus. The enzyme catalyses S-ubiquitinyl-[E2 ubiquitin-conjugating enzyme]-L-cysteine + [acceptor protein]-L-lysine = [E2 ubiquitin-conjugating enzyme]-L-cysteine + N(6)-ubiquitinyl-[acceptor protein]-L-lysine.. With respect to regulation, the CARD domain inhibits the activation of E3 ubiquitin ligase activity by preventing RING domain dimerization and E2 ubiquitin donor binding and activation. The CARD domain-mediated autoinhibition of the E3 ubiquitin-protein ligase activity suppresses cell proliferation and migration. USP19 regulates the stability of BIRC2/c-IAP1 by preventing its ubiquitination. Functionally, multi-functional protein which regulates not only caspases and apoptosis, but also modulates inflammatory signaling and immunity, mitogenic kinase signaling, and cell proliferation, as well as cell invasion and metastasis. Acts as an E3 ubiquitin-protein ligase regulating NF-kappa-B signaling and regulates both canonical and non-canonical NF-kappa-B signaling by acting in opposite directions: acts as a positive regulator of the canonical pathway and suppresses constitutive activation of non-canonical NF-kappa-B signaling. The target proteins for its E3 ubiquitin-protein ligase activity include: RIPK1, RIPK2, RIPK3, RIPK4, CASP3, CASP7, CASP8, TRAF2, DIABLO/SMAC, MAP3K14/NIK, MAP3K5/ASK1, IKBKG/NEMO, IKBKE and MXD1/MAD1. Can also function as an E3 ubiquitin-protein ligase of the NEDD8 conjugation pathway, targeting effector caspases for neddylation and inactivation. Acts as an important regulator of innate immune signaling via regulation of Toll-like receptors (TLRs), Nodlike receptors (NLRs) and RIG-I like receptors (RLRs), collectively referred to as pattern recognition receptors (PRRs). Protects cells from spontaneous formation of the ripoptosome, a large multi-protein complex that has the capability to kill cancer cells in a caspase-dependent and caspase-independent manner. Suppresses ripoptosome formation by ubiquitinating RIPK1 and CASP8. Can stimulate the transcriptional activity of E2F1. Plays a role in the modulation of the cell cycle. In Mus musculus (Mouse), this protein is Baculoviral IAP repeat-containing protein 2 (Birc2).